Here is a 93-residue protein sequence, read N- to C-terminus: Phosphocarrier protein HPr (93 aa).

Residues 2-89 (AERRVNVGWA…KLVAEGLEEL (88 aa)) form the HPr domain. Catalysis depends on H15, which acts as the Pros-phosphohistidine intermediate.

This sequence belongs to the HPr family.

It is found in the cytoplasm. Its function is as follows. General (non sugar-specific) component of the phosphoenolpyruvate-dependent sugar phosphotransferase system (sugar PTS). This major carbohydrate active-transport system catalyzes the phosphorylation of incoming sugar substrates concomitantly with their translocation across the cell membrane. The phosphoryl group from phosphoenolpyruvate (PEP) is transferred to the phosphoryl carrier protein HPr by enzyme I. Phospho-HPr then transfers it to the PTS EIIA domain. The sequence is that of Phosphocarrier protein HPr (ptsH) from Streptomyces coelicolor (strain ATCC BAA-471 / A3(2) / M145).